The following is a 230-amino-acid chain: Cytochrome c oxidase subunit 2 (230 aa).

At 1–14 (MAHPSQLGFQDAAS) the chain is on the mitochondrial intermembrane side. The helical transmembrane segment at 15-45 (PVMEELLHFHDHTLMIVFLISTLVLYIIMAM) threads the bilayer. The Mitochondrial matrix segment spans residues 46–59 (VSTKLTNKYILDSQ). The chain crosses the membrane as a helical span at residues 60 to 87 (EIEIVWTILPAVILIMIALPSLRILYLM). Residues 88–230 (DEINDPHLTI…SWSSLMLEEA (143 aa)) are Mitochondrial intermembrane-facing. The Cu cation site is built by H161, C196, E198, C200, H204, and M207. Mg(2+) is bound at residue E198.

It belongs to the cytochrome c oxidase subunit 2 family. In terms of assembly, component of the cytochrome c oxidase (complex IV, CIV), a multisubunit enzyme composed of 14 subunits. The complex is composed of a catalytic core of 3 subunits MT-CO1, MT-CO2 and MT-CO3, encoded in the mitochondrial DNA, and 11 supernumerary subunits COX4I, COX5A, COX5B, COX6A, COX6B, COX6C, COX7A, COX7B, COX7C, COX8 and NDUFA4, which are encoded in the nuclear genome. The complex exists as a monomer or a dimer and forms supercomplexes (SCs) in the inner mitochondrial membrane with NADH-ubiquinone oxidoreductase (complex I, CI) and ubiquinol-cytochrome c oxidoreductase (cytochrome b-c1 complex, complex III, CIII), resulting in different assemblies (supercomplex SCI(1)III(2)IV(1) and megacomplex MCI(2)III(2)IV(2)). Found in a complex with TMEM177, COA6, COX18, COX20, SCO1 and SCO2. Interacts with TMEM177 in a COX20-dependent manner. Interacts with COX20. Interacts with COX16. Cu cation serves as cofactor.

It localises to the mitochondrion inner membrane. The enzyme catalyses 4 Fe(II)-[cytochrome c] + O2 + 8 H(+)(in) = 4 Fe(III)-[cytochrome c] + 2 H2O + 4 H(+)(out). Component of the cytochrome c oxidase, the last enzyme in the mitochondrial electron transport chain which drives oxidative phosphorylation. The respiratory chain contains 3 multisubunit complexes succinate dehydrogenase (complex II, CII), ubiquinol-cytochrome c oxidoreductase (cytochrome b-c1 complex, complex III, CIII) and cytochrome c oxidase (complex IV, CIV), that cooperate to transfer electrons derived from NADH and succinate to molecular oxygen, creating an electrochemical gradient over the inner membrane that drives transmembrane transport and the ATP synthase. Cytochrome c oxidase is the component of the respiratory chain that catalyzes the reduction of oxygen to water. Electrons originating from reduced cytochrome c in the intermembrane space (IMS) are transferred via the dinuclear copper A center (CU(A)) of subunit 2 and heme A of subunit 1 to the active site in subunit 1, a binuclear center (BNC) formed by heme A3 and copper B (CU(B)). The BNC reduces molecular oxygen to 2 water molecules using 4 electrons from cytochrome c in the IMS and 4 protons from the mitochondrial matrix. The sequence is that of Cytochrome c oxidase subunit 2 (MT-CO2) from Squalus acanthias (Spiny dogfish).